The primary structure comprises 190 residues: Natural killer cells antigen CD94 (190 aa).

The Cytoplasmic segment spans residues 1-10; the sequence is MAAFRTTAWR. The helical; Signal-anchor for type II membrane protein transmembrane segment at 11–31 threads the bilayer; it reads LISGVLGVICLVLMAALGVLL. At 32 to 190 the chain is on the extracellular side; it reads KNSLTKRSVQ…FRYICKQQLI (159 aa). Cystine bridges form between Cys-69/Cys-81, Cys-72/Cys-83, Cys-100/Cys-185, and Cys-163/Cys-177. Positions 79 to 186 constitute a C-type lectin domain; that stretch reads YQCNCYFISN…CEKKFRYICK (108 aa). Residues Asn-104 and Asn-144 are each glycosylated (N-linked (GlcNAc...) asparagine).

In terms of assembly, can form disulfide-bonded heterodimer with NKG2 family members KLRC1 and KLRC2. KLRD1-KLRC1 heterodimer interacts with peptide-bound MHC-E-B2M heterotrimeric complex. KLRD1 plays a prominent role in directly interacting with MHC-E. KLRD1-KLRC1 interacts with much higher affinity with peptide-bound MHC-E-B2M than KLRD1-KLRC2. Interacts with the adapter protein TYROBP/DAP12; this interaction is required for cell surface expression and cell activation.

The protein resides in the cell membrane. Its function is as follows. Immune receptor involved in self-nonself discrimination. In complex with KLRC1 or KLRC2 on cytotoxic and regulatory lymphocyte subsets, recognizes non-classical major histocompatibility (MHC) class Ib molecule MHC-E loaded with self-peptides derived from the signal sequence of classical MHC class Ia and non-classical MHC class Ib molecules. Enables cytotoxic cells to monitor the expression of MHC class I molecules in healthy cells and to tolerate self. Primarily functions as a ligand binding subunit as it lacks the capacity to signal. Functionally, KLRD1-KLRC1 acts as an immune inhibitory receptor. Key inhibitory receptor on natural killer (NK) cells that regulates their activation and effector functions. Dominantly counteracts T cell receptor signaling on a subset of memory/effector CD8-positive T cells as part of an antigen-driven response to avoid autoimmunity. On intraepithelial CD8-positive gamma-delta regulatory T cells triggers TGFB1 secretion, which in turn limits the cytotoxic programming of intraepithelial CD8-positive alpha-beta T cells, distinguishing harmless from pathogenic antigens. In MHC-E-rich tumor microenvironment, acts as an immune inhibitory checkpoint and may contribute to progressive loss of effector functions of NK cells and tumor-specific T cells, a state known as cell exhaustion. Upon MHC-E-peptide binding, transmits intracellular signals through KLRC1 immunoreceptor tyrosine-based inhibition motifs (ITIMs) by recruiting INPP5D/SHIP-1 and INPPL1/SHIP-2 tyrosine phosphatases to ITIMs, and ultimately opposing signals transmitted by activating receptors through dephosphorylation of proximal signaling molecules. In terms of biological role, KLRD1-KLRC2 acts as an immune activating receptor. On cytotoxic lymphocyte subsets recognizes MHC-E loaded with signal sequence-derived peptides from non-classical MHC class Ib MHC-G molecules, likely playing a role in the generation and effector functions of adaptive NK cells and in maternal-fetal tolerance during pregnancy. Regulates the effector functions of terminally differentiated cytotoxic lymphocyte subsets, and in particular may play a role in adaptive NK cell response to viral infection. Upon MHC-E-peptide binding, transmits intracellular signals via the adapter protein TYROBP/DAP12, triggering the phosphorylation of proximal signaling molecules and cell activation. The protein is Natural killer cells antigen CD94 (KLRD1) of Bos taurus (Bovine).